The primary structure comprises 379 residues: Glutamate 5-kinase (379 aa).

Lys14 contributes to the ATP binding site. Substrate contacts are provided by Ser54, Asp141, and Asn153. ATP is bound by residues 173 to 174 and 215 to 221; these read TD and TGGMATK. The PUA domain occupies 280–358; sequence KGRLLLDIGA…DEIEPLLGYD (79 aa).

The protein belongs to the glutamate 5-kinase family.

It is found in the cytoplasm. The enzyme catalyses L-glutamate + ATP = L-glutamyl 5-phosphate + ADP. It participates in amino-acid biosynthesis; L-proline biosynthesis; L-glutamate 5-semialdehyde from L-glutamate: step 1/2. Catalyzes the transfer of a phosphate group to glutamate to form L-glutamate 5-phosphate. The protein is Glutamate 5-kinase of Shewanella amazonensis (strain ATCC BAA-1098 / SB2B).